The following is a 444-amino-acid chain: Sperm-associated antigen 4 protein (444 aa).

Residues 1–109 are disordered; the sequence is MRRNPRPGSA…GGASEPSGSP (109 aa). Over residues 19–36 the composition is skewed to low complexity; sequence NFYSENSNSSHSATSGDS. Transmembrane regions (helical) follow at residues 137–159 and 166–188; these read FLSLFFQVLSVFLSLVADGLVCV and IRFLFTAVSLLSIFLAALWWGLL. A coiled-coil region spans residues 204-241; it reads LSQYHHRVHSQGQQLQQLQAELSKLHKEVTSVRAAHSE. Residues 267 to 428 form the SUN domain; it reads GASIDLEKTS…YRVRAHGVRI (162 aa).

As to quaternary structure, self-associates. Interacts with ODF1. May associate with microtubules. Interacts with SUN3 and SYNE1; suggesting the formation of a LINC complexs; a SUN domain-based heterotrimer of SPAG4 and SUN3 may associate with SYNE1. Interacts with SEPT12 and LMNB1; during spermatogenesis. Testis specific. Exclusively expressed in spermatids.

The protein localises to the membrane. Its subcellular location is the cytoplasm. It is found in the cytoskeleton. The protein resides in the flagellum axoneme. It localises to the nucleus envelope. The protein localises to the nucleus inner membrane. Involved in spermatogenesis. Required for sperm head formation but not required to establish and maintain general polarity of the sperm head. Required for anchoring and organization of the manchette. Required for targeting of SUN3 and probably SYNE1 through a probable SUN1:SYNE3 LINC complex to the nuclear envelope and involved in accurate posterior sperm head localization of the complex. May anchor SUN3 the nuclear envelope. Involved in maintenance of the nuclear envelope integrity. May assist the organization and assembly of outer dense fibers (ODFs), a specific structure of the sperm tail. The chain is Sperm-associated antigen 4 protein (Spag4) from Rattus norvegicus (Rat).